A 184-amino-acid polypeptide reads, in one-letter code: Probable RNA 2'-phosphotransferase (184 aa).

Belongs to the KptA/TPT1 family.

Its function is as follows. Removes the 2'-phosphate from RNA via an intermediate in which the phosphate is ADP-ribosylated by NAD followed by a presumed transesterification to release the RNA and generate ADP-ribose 1''-2''-cyclic phosphate (APPR&gt;P). May function as an ADP-ribosylase. The chain is Probable RNA 2'-phosphotransferase from Rhizobium leguminosarum bv. trifolii (strain WSM2304).